Reading from the N-terminus, the 523-residue chain is Acetyl-coenzyme A carboxylase carboxyl transferase subunit beta, chloroplastic (523 aa).

Positions 224-523 (FWVICENCHK…FVPSNQNSIK (300 aa)) constitute a CoA carboxyltransferase N-terminal domain. The Zn(2+) site is built by Cys228, Cys231, Cys247, and Cys250. The segment at 228 to 250 (CENCHKFNYKRLFKSKMNICEEC) adopts a C4-type zinc-finger fold.

It belongs to the AccD/PCCB family. In terms of assembly, acetyl-CoA carboxylase is a heterohexamer composed of biotin carboxyl carrier protein, biotin carboxylase and 2 subunits each of ACCase subunit alpha and ACCase plastid-coded subunit beta (accD). Requires Zn(2+) as cofactor.

It localises to the plastid. It is found in the chloroplast stroma. It catalyses the reaction N(6)-carboxybiotinyl-L-lysyl-[protein] + acetyl-CoA = N(6)-biotinyl-L-lysyl-[protein] + malonyl-CoA. It participates in lipid metabolism; malonyl-CoA biosynthesis; malonyl-CoA from acetyl-CoA: step 1/1. Its function is as follows. Component of the acetyl coenzyme A carboxylase (ACC) complex. Biotin carboxylase (BC) catalyzes the carboxylation of biotin on its carrier protein (BCCP) and then the CO(2) group is transferred by the transcarboxylase to acetyl-CoA to form malonyl-CoA. This chain is Acetyl-coenzyme A carboxylase carboxyl transferase subunit beta, chloroplastic, found in Cucumis sativus (Cucumber).